The sequence spans 324 residues: Olfactory receptor 5T17 (324 aa).

The Extracellular portion of the chain corresponds to 1–37 (MPRTPSYTNTKTTQVNNVTEITVFILLGFTDDVDMNI). Residue Asn17 is glycosylated (N-linked (GlcNAc...) asparagine). Residues 38-58 (FLFILFLAIYVVTLIGNLGLV) form a helical membrane-spanning segment. At 59 to 66 (VLVIEDSR) the chain is on the cytoplasmic side. A helical membrane pass occupies residues 67–87 (LHNPMYYFLTVLSSLDACFSS). Topologically, residues 88-111 (VLTPKMLVNFLSKNKSISFAGCAT) are extracellular. N-linked (GlcNAc...) asparagine glycosylation occurs at Asn101. A disulfide bridge connects residues Cys109 and Cys201. A helical transmembrane segment spans residues 112-132 (QMLLFVTFGTTECFLLAAMAY). The Cytoplasmic portion of the chain corresponds to 133–145 (DRYLAIYSPLLYA). The helical transmembrane segment at 146–166 (VRMSPRVYVPLIIASYTGGIL) threads the bilayer. At 167-208 (HATIHTVATFSLSFCGSNEIRHVFCDIPPLLALSCSDTHLNQ) the chain is on the extracellular side. The helical transmembrane segment at 209–229 (LLLFYCAGSIELITILIVLVS) threads the bilayer. The Cytoplasmic portion of the chain corresponds to 230 to 249 (YGFVLLAILKINSAEGRRKI). A helical membrane pass occupies residues 250–270 (FSTCGAHLTGVSIFHGTILFM). Over 271-283 (YVRPSSNYTLEQD) the chain is Extracellular. Asn277 carries N-linked (GlcNAc...) asparagine glycosylation. A helical transmembrane segment spans residues 284–304 (MVVSTFYTIVIPMLNPIIYSL). Over 305-324 (RNKDVKEAMRKLLKRKLVHE) the chain is Cytoplasmic.

This sequence belongs to the G-protein coupled receptor 1 family.

It is found in the cell membrane. Potential odorant receptor. This is Olfactory receptor 5T17 from Mus musculus (Mouse).